A 395-amino-acid polypeptide reads, in one-letter code: S-adenosylmethionine synthase (395 aa).

Histidine 14 contributes to the ATP binding site. Aspartate 16 is a Mg(2+) binding site. Glutamate 42 is a binding site for K(+). Residues glutamate 55 and glutamine 98 each contribute to the L-methionine site. The segment at 98–108 (QSPDIAMGVDK) is flexible loop. ATP contacts are provided by residues 175-177 (DGK), 242-243 (RF), aspartate 251, 257-258 (RK), alanine 274, and lysine 278. Aspartate 251 provides a ligand contact to L-methionine. Position 282 (lysine 282) interacts with L-methionine.

Belongs to the AdoMet synthase family. Homotetramer; dimer of dimers. The cofactor is Mg(2+). K(+) serves as cofactor.

It is found in the cytoplasm. It catalyses the reaction L-methionine + ATP + H2O = S-adenosyl-L-methionine + phosphate + diphosphate. It participates in amino-acid biosynthesis; S-adenosyl-L-methionine biosynthesis; S-adenosyl-L-methionine from L-methionine: step 1/1. In terms of biological role, catalyzes the formation of S-adenosylmethionine (AdoMet) from methionine and ATP. The overall synthetic reaction is composed of two sequential steps, AdoMet formation and the subsequent tripolyphosphate hydrolysis which occurs prior to release of AdoMet from the enzyme. This Thermosipho melanesiensis (strain DSM 12029 / CIP 104789 / BI429) protein is S-adenosylmethionine synthase.